The primary structure comprises 245 residues: Acetylglutamate kinase (245 aa).

Residues 41 to 42, R63, and N156 contribute to the substrate site; that span reads GG.

Belongs to the acetylglutamate kinase family. ArgB subfamily.

The protein resides in the cytoplasm. It catalyses the reaction N-acetyl-L-glutamate + ATP = N-acetyl-L-glutamyl 5-phosphate + ADP. It functions in the pathway amino-acid biosynthesis; L-arginine biosynthesis; N(2)-acetyl-L-ornithine from L-glutamate: step 2/4. In terms of biological role, catalyzes the ATP-dependent phosphorylation of N-acetyl-L-glutamate. The polypeptide is Acetylglutamate kinase (Streptococcus gordonii (strain Challis / ATCC 35105 / BCRC 15272 / CH1 / DL1 / V288)).